A 255-amino-acid polypeptide reads, in one-letter code: 3-deoxy-manno-octulosonate cytidylyltransferase (255 aa).

This sequence belongs to the KdsB family.

Its subcellular location is the cytoplasm. It catalyses the reaction 3-deoxy-alpha-D-manno-oct-2-ulosonate + CTP = CMP-3-deoxy-beta-D-manno-octulosonate + diphosphate. It participates in nucleotide-sugar biosynthesis; CMP-3-deoxy-D-manno-octulosonate biosynthesis; CMP-3-deoxy-D-manno-octulosonate from 3-deoxy-D-manno-octulosonate and CTP: step 1/1. Its pathway is bacterial outer membrane biogenesis; lipopolysaccharide biosynthesis. In terms of biological role, activates KDO (a required 8-carbon sugar) for incorporation into bacterial lipopolysaccharide in Gram-negative bacteria. This is 3-deoxy-manno-octulosonate cytidylyltransferase from Saccharophagus degradans (strain 2-40 / ATCC 43961 / DSM 17024).